The following is a 203-amino-acid chain: Suppressor/enhancer of lin-12 protein 9 (203 aa).

Positions 1–18 (MNSLTWILAVLFVTPAAS) are cleaved as a signal peptide. The Lumenal portion of the chain corresponds to 19–170 (YFIHVDANEE…RNINENTNSR (152 aa)). One can recognise a GOLD domain in the interval 28–110 (EQCFFDRLTS…PKAVMFTVEI (83 aa)). A helical membrane pass occupies residues 171-191 (VVMWAAFEAFVLVGMTVGQIF). Residues 192 to 203 (YLKRFFEVRTMV) lie on the Cytoplasmic side of the membrane.

It belongs to the EMP24/GP25L family.

The protein localises to the cytoplasmic vesicle membrane. It is found in the cytoplasmic vesicle. The protein resides in the COPI-coated vesicle membrane. It localises to the golgi apparatus membrane. May have a role in the negative regulation of lin-12 and glp-1 transport to the cell surface. May also have a role in a quality control mechanism for endoplasmic reticulum-Golgi transport; the budding of coatomer-coated and other species of coated vesicles, could bind cargo molecules to collect them into budding vesicles. Involved in regulating the expression of proteasomal subunits such as rpt-3 in order to confer resistance to proteasomal dysfunction. The chain is Suppressor/enhancer of lin-12 protein 9 (sel-9) from Caenorhabditis elegans.